The following is a 247-amino-acid chain: Carboxy-S-adenosyl-L-methionine synthase (247 aa).

Residues Y40, 65–67, 90–91, 122–123, N137, and R204 contribute to the S-adenosyl-L-methionine site; these read GSS, DN, and DI.

This sequence belongs to the class I-like SAM-binding methyltransferase superfamily. Cx-SAM synthase family. In terms of assembly, homodimer.

It catalyses the reaction prephenate + S-adenosyl-L-methionine = carboxy-S-adenosyl-L-methionine + 3-phenylpyruvate + H2O. Its function is as follows. Catalyzes the conversion of S-adenosyl-L-methionine (SAM) to carboxy-S-adenosyl-L-methionine (Cx-SAM). The chain is Carboxy-S-adenosyl-L-methionine synthase from Pseudomonas savastanoi pv. phaseolicola (strain 1448A / Race 6) (Pseudomonas syringae pv. phaseolicola (strain 1448A / Race 6)).